A 224-amino-acid chain; its full sequence is Germin-like protein 8-5 (224 aa).

A signal peptide spans 1 to 22 (MASPSSLCLLAALALISWQAMA). An intrachain disulfide couples cysteine 32 to cysteine 47. In terms of domain architecture, Cupin type-1 spans 62–212 (AKLDTPRKTN…AFQVEKGTID (151 aa)). An N-linked (GlcNAc...) asparagine glycan is attached at asparagine 76. Positions 109, 111, and 116 each coordinate Mn(2+). N-linked (GlcNAc...) asparagine glycosylation is present at asparagine 135. Mn(2+) is bound at residue histidine 157.

This sequence belongs to the germin family. In terms of assembly, oligomer (believed to be a pentamer but probably hexamer).

It localises to the secreted. The protein localises to the extracellular space. Its subcellular location is the apoplast. Its function is as follows. Plays a role in broad-spectrum disease resistance. Probably has no oxalate oxidase activity even if the active site is conserved. This is Germin-like protein 8-5 from Oryza sativa subsp. japonica (Rice).